The sequence spans 543 residues: Chaperonin GroEL (543 aa).

Residues 29-32, 86-90, G413, 478-480, and D494 contribute to the ATP site; these read TLGP, DGTTT, and NAA.

This sequence belongs to the chaperonin (HSP60) family. As to quaternary structure, forms a cylinder of 14 subunits composed of two heptameric rings stacked back-to-back. Interacts with the co-chaperonin GroES.

The protein localises to the cytoplasm. The catalysed reaction is ATP + H2O + a folded polypeptide = ADP + phosphate + an unfolded polypeptide.. In terms of biological role, together with its co-chaperonin GroES, plays an essential role in assisting protein folding. The GroEL-GroES system forms a nano-cage that allows encapsulation of the non-native substrate proteins and provides a physical environment optimized to promote and accelerate protein folding. The protein is Chaperonin GroEL of Lactobacillus johnsonii (strain CNCM I-12250 / La1 / NCC 533).